A 240-amino-acid chain; its full sequence is Methylthioribulose-1-phosphate dehydratase (240 aa).

Cys99 is a substrate binding site. Residues His116 and His118 each coordinate Zn(2+). Glu145 (proton donor/acceptor) is an active-site residue. Zn(2+) is bound at residue His201.

It belongs to the aldolase class II family. MtnB subfamily. Requires Zn(2+) as cofactor.

The protein localises to the cytoplasm. It carries out the reaction 5-(methylsulfanyl)-D-ribulose 1-phosphate = 5-methylsulfanyl-2,3-dioxopentyl phosphate + H2O. Its pathway is amino-acid biosynthesis; L-methionine biosynthesis via salvage pathway; L-methionine from S-methyl-5-thio-alpha-D-ribose 1-phosphate: step 2/6. Functionally, catalyzes the dehydration of methylthioribulose-1-phosphate (MTRu-1-P) into 2,3-diketo-5-methylthiopentyl-1-phosphate (DK-MTP-1-P). This chain is Methylthioribulose-1-phosphate dehydratase, found in Ajellomyces capsulatus (strain G186AR / H82 / ATCC MYA-2454 / RMSCC 2432) (Darling's disease fungus).